Reading from the N-terminus, the 323-residue chain is Lipoyl synthase (323 aa).

Residues Cys61, Cys66, Cys72, Cys87, Cys91, Cys94, and Ser303 each coordinate [4Fe-4S] cluster. Residues 73 to 292 (WTKKTATFLV…EQYGLSIGIP (220 aa)) form the Radical SAM core domain.

Belongs to the radical SAM superfamily. Lipoyl synthase family. It depends on [4Fe-4S] cluster as a cofactor.

The protein resides in the cytoplasm. The enzyme catalyses [[Fe-S] cluster scaffold protein carrying a second [4Fe-4S](2+) cluster] + N(6)-octanoyl-L-lysyl-[protein] + 2 oxidized [2Fe-2S]-[ferredoxin] + 2 S-adenosyl-L-methionine + 4 H(+) = [[Fe-S] cluster scaffold protein] + N(6)-[(R)-dihydrolipoyl]-L-lysyl-[protein] + 4 Fe(3+) + 2 hydrogen sulfide + 2 5'-deoxyadenosine + 2 L-methionine + 2 reduced [2Fe-2S]-[ferredoxin]. It participates in protein modification; protein lipoylation via endogenous pathway; protein N(6)-(lipoyl)lysine from octanoyl-[acyl-carrier-protein]: step 2/2. Functionally, catalyzes the radical-mediated insertion of two sulfur atoms into the C-6 and C-8 positions of the octanoyl moiety bound to the lipoyl domains of lipoate-dependent enzymes, thereby converting the octanoylated domains into lipoylated derivatives. In Protochlamydia amoebophila (strain UWE25), this protein is Lipoyl synthase.